The sequence spans 188 residues: ATP synthase subunit b (188 aa).

Residues 19-39 traverse the membrane as a helical segment; sequence LPAVYDIVWSAVVFVVLLVVI.

Belongs to the ATPase B chain family. As to quaternary structure, F-type ATPases have 2 components, F(1) - the catalytic core - and F(0) - the membrane proton channel. F(1) has five subunits: alpha(3), beta(3), gamma(1), delta(1), epsilon(1). F(0) has three main subunits: a(1), b(2) and c(10-14). The alpha and beta chains form an alternating ring which encloses part of the gamma chain. F(1) is attached to F(0) by a central stalk formed by the gamma and epsilon chains, while a peripheral stalk is formed by the delta and b chains.

Its subcellular location is the cell membrane. Its function is as follows. F(1)F(0) ATP synthase produces ATP from ADP in the presence of a proton or sodium gradient. F-type ATPases consist of two structural domains, F(1) containing the extramembraneous catalytic core and F(0) containing the membrane proton channel, linked together by a central stalk and a peripheral stalk. During catalysis, ATP synthesis in the catalytic domain of F(1) is coupled via a rotary mechanism of the central stalk subunits to proton translocation. In terms of biological role, component of the F(0) channel, it forms part of the peripheral stalk, linking F(1) to F(0). The chain is ATP synthase subunit b from Clavibacter michiganensis subsp. michiganensis (strain NCPPB 382).